We begin with the raw amino-acid sequence, 56 residues long: Ferredoxin (56 aa).

4Fe-4S ferredoxin-type domains lie at 2–28 (AYKI…SQGD) and 29–56 (SIFV…PVQE). Residues Cys-9, Cys-12, Cys-15, Cys-19, Cys-38, Cys-41, Cys-44, and Cys-48 each contribute to the [4Fe-4S] cluster site.

[4Fe-4S] cluster serves as cofactor.

Its function is as follows. Ferredoxins are iron-sulfur proteins that transfer electrons in a wide variety of metabolic reactions. This chain is Ferredoxin, found in Clostridium pasteurianum.